The sequence spans 267 residues: Methylglyoxal reductase DkgB (267 aa).

Tyr39 functions as the Proton donor in the catalytic mechanism. Residue His97 participates in substrate binding. Met179 to Asn231 is a binding site for NADP(+).

This sequence belongs to the aldo/keto reductase family. Monomer.

The protein localises to the cytoplasm. It carries out the reaction hydroxyacetone + NADP(+) = methylglyoxal + NADPH + H(+). In terms of biological role, aldo-keto reductase that significantly contributes to cellular methylglyoxal detoxification by catalyzing the NADPH-dependent conversion of methylglyoxal to acetol. The polypeptide is Methylglyoxal reductase DkgB (Yersinia pestis).